Here is a 417-residue protein sequence, read N- to C-terminus: Histidine--tRNA ligase (417 aa).

It belongs to the class-II aminoacyl-tRNA synthetase family. Homodimer.

It localises to the cytoplasm. It carries out the reaction tRNA(His) + L-histidine + ATP = L-histidyl-tRNA(His) + AMP + diphosphate + H(+). The polypeptide is Histidine--tRNA ligase (Oleidesulfovibrio alaskensis (strain ATCC BAA-1058 / DSM 17464 / G20) (Desulfovibrio alaskensis)).